The chain runs to 63 residues: MPKMKSVKSAVKRFKVGKNKIKRGSAFRSHILTKKPAKRMRDLRTAKYVHSTNVKAVEKMLGI.

Belongs to the bacterial ribosomal protein bL35 family.

This Campylobacter jejuni (strain RM1221) protein is Large ribosomal subunit protein bL35.